The chain runs to 867 residues: Alanine--tRNA ligase (867 aa).

Zn(2+)-binding residues include histidine 555, histidine 559, cysteine 657, and histidine 661.

It belongs to the class-II aminoacyl-tRNA synthetase family. Zn(2+) is required as a cofactor.

Its subcellular location is the cytoplasm. The catalysed reaction is tRNA(Ala) + L-alanine + ATP = L-alanyl-tRNA(Ala) + AMP + diphosphate. In terms of biological role, catalyzes the attachment of alanine to tRNA(Ala) in a two-step reaction: alanine is first activated by ATP to form Ala-AMP and then transferred to the acceptor end of tRNA(Ala). Also edits incorrectly charged Ser-tRNA(Ala) and Gly-tRNA(Ala) via its editing domain. This is Alanine--tRNA ligase from Psychromonas ingrahamii (strain DSM 17664 / CCUG 51855 / 37).